Here is a 439-residue protein sequence, read N- to C-terminus: AT-hook motif nuclear-localized protein 13 (439 aa).

3 disordered regions span residues 1-46, 69-216, and 342-439; these read MDSR…NSYN, QRLP…LGGT, and GRKQ…NSPQ. Low complexity-rich tracts occupy residues 9–31 and 79–95; these read QQQQQQQQQQQQQQQQQHLQQQQ and PHQPQQHQYHHPQPQQQ. Over residues 109-120 the composition is skewed to polar residues; that stretch reads SPSSVAATQQHS. Positions 130–139 are enriched in basic residues; sequence VKKKRGRPRK. The Bipartite nuclear localization signal signature appears at 131 to 139; sequence KKKRGRPRK. Positions 131-143 form a DNA-binding region, a.T hook 1; it reads KKKRGRPRKYAAD. Composition is skewed to gly residues over residues 143 to 152 and 171 to 183; these read DGGGGGGGGS and YGGGNEGGGGGDS. The segment at residues 196-208 is a DNA-binding region (a.T hook 2); the sequence is KRNRGRPPGSGKK. In terms of domain architecture, PPC spans 217-359; the sequence is GGVGFTPHVI…GRAQNTPEPA (143 aa). Polar residues predominate over residues 347–357; it reads QSAGRAQNTPE. Low complexity-rich tracts occupy residues 376-386 and 403-416; these read SPRSQGQQHSS and NNNNSNNHGIFGNS. Residues 428–439 show a composition bias toward polar residues; sequence MYQNLWPGNSPQ.

Its subcellular location is the nucleus. Transcription factor that specifically binds AT-rich DNA sequences related to the nuclear matrix attachment regions (MARs). This Arabidopsis thaliana (Mouse-ear cress) protein is AT-hook motif nuclear-localized protein 13.